The following is a 401-amino-acid chain: Phosphoglycerate kinase (401 aa).

Substrate is bound by residues 26–28 (DLN), arginine 41, 64–67 (HLGR), arginine 123, and arginine 156. ATP contacts are provided by residues lysine 207, glycine 298, glutamate 329, and 355-358 (GGDS).

The protein belongs to the phosphoglycerate kinase family. In terms of assembly, monomer.

The protein localises to the cytoplasm. It carries out the reaction (2R)-3-phosphoglycerate + ATP = (2R)-3-phospho-glyceroyl phosphate + ADP. It functions in the pathway carbohydrate degradation; glycolysis; pyruvate from D-glyceraldehyde 3-phosphate: step 2/5. The sequence is that of Phosphoglycerate kinase from Bdellovibrio bacteriovorus (strain ATCC 15356 / DSM 50701 / NCIMB 9529 / HD100).